Here is a 562-residue protein sequence, read N- to C-terminus: Protein TBF1 (562 aa).

The segment at 376-414 (ASMSNSSSGPHSSHNNSSNSNNNGSIGLRKPKAKRTWSK) is disordered. Over residues 377–400 (SMSNSSSGPHSSHNNSSNSNNNGS) the composition is skewed to low complexity. An HTH myb-type domain is found at 404–460 (RKPKAKRTWSKEEEEALVEGLKEVGPSWSKILDLYGPGGKITENLKNRTQVQLKDKA). The H-T-H motif DNA-binding region spans 431–456 (WSKILDLYGPGGKITENLKNRTQVQL). The segment at 495–562 (FSQSPNSSTI…GFDPHLEDGM (68 aa)) is disordered. Polar residues-rich tracts occupy residues 496–522 (SQSP…ATED) and 532–552 (GQNS…SDNT).

As to quaternary structure, homodimer.

Its subcellular location is the nucleus. The protein resides in the chromosome. The protein localises to the telomere. Its function is as follows. Binds the telomeric double-stranded TTAGGG repeat and negatively regulates telomere length. Involved in the regulation of gene expression. 52 binding sites have been identified, distributed over 15 chromosomes. A member of the general regulatory factors (GRFs) which act as genome partitioners. Acts as a chromatin insulator which are known as STARs (Subtelomeric anti-silencing region). STARs prevent negative or positive transcription influence by extending across chromatin to a promoter. The sequence is that of Protein TBF1 (TBF1) from Saccharomyces cerevisiae (strain ATCC 204508 / S288c) (Baker's yeast).